A 206-amino-acid polypeptide reads, in one-letter code: Ribosomal RNA large subunit methyltransferase E (206 aa).

G60, W62, D80, D96, and D121 together coordinate S-adenosyl-L-methionine. K161 serves as the catalytic Proton acceptor.

Belongs to the class I-like SAM-binding methyltransferase superfamily. RNA methyltransferase RlmE family.

It localises to the cytoplasm. The catalysed reaction is uridine(2552) in 23S rRNA + S-adenosyl-L-methionine = 2'-O-methyluridine(2552) in 23S rRNA + S-adenosyl-L-homocysteine + H(+). Specifically methylates the uridine in position 2552 of 23S rRNA at the 2'-O position of the ribose in the fully assembled 50S ribosomal subunit. In Francisella tularensis subsp. holarctica (strain FTNF002-00 / FTA), this protein is Ribosomal RNA large subunit methyltransferase E.